The sequence spans 186 residues: ADP-ribosylation factor-like protein 6 (186 aa).

Residue Gly2 is the site of N-myristoyl glycine attachment. GTP-binding positions include 24 to 31 (GLDNSGKT), 69 to 73 (DMSGQ), and 130 to 133 (NKMD).

The protein belongs to the small GTPase superfamily. Arf family. As to quaternary structure, interacts with SEC61B, ARL6IP1, ARL6IP2, ARL6IP3, ARL6IP4 ARL6IP5 and ARL6IP6. Interacts (GTP-bound form) with the BBSome a complex that contains BBS1, BBS2, BBS4, BBS5, BBS7, BBS8/TTC8, BBS9 and BBIP10. Interacts (GTP-free form) with IFT27.

The protein resides in the cell projection. It is found in the cilium membrane. The protein localises to the cytoplasm. Its subcellular location is the cytoskeleton. It localises to the cilium axoneme. The protein resides in the cilium basal body. Involved in membrane protein trafficking at the base of the ciliary organelle. Mediates recruitment onto plasma membrane of the BBSome complex which would constitute a coat complex required for sorting of specific membrane proteins to the primary cilia. Together with the BBSome complex and LTZL1, controls SMO ciliary trafficking and contributes to the sonic hedgehog (SHH) pathway regulation. May regulate cilia assembly and disassembly and subsequent ciliary signaling events such as the Wnt signaling cascade. Isoform 2 may be required for proper retinal function and organization. The polypeptide is ADP-ribosylation factor-like protein 6 (ARL6) (Bos taurus (Bovine)).